A 525-amino-acid polypeptide reads, in one-letter code: D-aminopeptidase (525 aa).

Catalysis depends on Ser-62, which acts as the Nucleophile. Lys-65 (proton donor/acceptor) is an active-site residue. The interval 485–495 (PRALDHTAPGD) is important for specificity. Asp-489 is a substrate binding site.

The protein belongs to the peptidase S12 family. As to quaternary structure, homodimer.

The catalysed reaction is Release of an N-terminal D-amino acid from a peptide, Xaa-|-Yaa-, in which Xaa is preferably D-Ala, D-Ser or D-Thr. D-amino acid amides and methyl esters also are hydrolyzed, as is glycine amide.. Its activity is regulated as follows. Inhibited by beta-lactam compounds such as 6-aminopenicillic acid, 7-aminocephalosporanic acid, benzylpenicillin and ampicillin. Inhibited by p-chloromercuribenzoate. Its function is as follows. Hydrolyzes N-terminal residues in D-amino acid-containing peptides. The polypeptide is D-aminopeptidase (Gluconobacter oxydans (strain 621H) (Gluconobacter suboxydans)).